The primary structure comprises 114 residues: Ghrelin (114 aa).

An N-terminal signal peptide occupies residues 1–24; that stretch reads MNFGKAAIFGVVLFCLLWTEGAQA. Thr-27 carries O-decanoyl threonine; alternate lipidation. Thr-27 is lipidated: O-octanoyl threonine; alternate. The propeptide at 55-114 is removed in mature form; it reads GVEDDLAGEEIGVTFPLDMKMTQEQFQKQRAAVQDFLYSSLLSLGSVQDTEDKNENPQSQ.

The protein belongs to the motilin family. Post-translationally, O-octanoylated by GOAT/MBOAT4. O-octanoylation or O-decanoylation is essential for activity. The O-decanoylated form ghrelin-27-C10 differs in the length of the carbon backbone of the carboxylic acid bound to Thr-27. 33% of frog ghrelin is O-decanoylated. 80% of frog ghrelin has Asn-52 cleaved from its C-terminus giving rise to ghrelin-27. As to expression, high levels in stomach. Moderate levels in small intestine, pancreas and testis. Low levels in heart, lung and gall bladder.

The protein localises to the secreted. In terms of biological role, ligand for growth hormone secretagogue receptor type 1 (GHSR). Induces the release of growth hormone from the pituitary. Has an appetite-stimulating effect, induces adiposity and stimulates gastric acid secretion. Involved in growth regulation. This is Ghrelin (GHRL) from Aquarana catesbeiana (American bullfrog).